Here is a 445-residue protein sequence, read N- to C-terminus: Rab GDP dissociation inhibitor beta (445 aa).

Position 1 is an N-acetylmethionine (M1). N6-succinyllysine is present on K57. K112 bears the N6-acetyllysine mark. S130 is modified (phosphoserine). At K269 the chain carries N6-acetyllysine. S382 is subject to Phosphoserine.

Belongs to the Rab GDI family. As to quaternary structure, interacts with RHOH. Interacts with the GDP-bound inactive forms of RAB3A, RAB3B, RAB3C, RAB5A, RAB5B, RAB5C, RAB8A, RAB8B, RAB10, RAB12, RAB35, and RAB43; binds RAB3D to a lesser extent. Interacts with DZIP1; this interaction negatively regulates the interaction of GDI2 with GDP-bound RAB8A.

The protein resides in the cytoplasm. The protein localises to the membrane. Its subcellular location is the golgi apparatus. It is found in the trans-Golgi network. Functionally, GDP-dissociation inhibitor preventing the GDP to GTP exchange of most Rab proteins. By keeping these small GTPases in their inactive GDP-bound form regulates intracellular membrane trafficking. Negatively regulates protein transport to the cilium and ciliogenesis through the inhibition of RAB8A. The sequence is that of Rab GDP dissociation inhibitor beta (GDI2) from Canis lupus familiaris (Dog).